Here is a 127-residue protein sequence, read N- to C-terminus: DNA-directed RNA polymerase subunit omega (127 aa).

This sequence belongs to the RNA polymerase subunit omega family. In terms of assembly, the RNAP catalytic core consists of 2 alpha, 1 beta, 1 beta' and 1 omega subunit. When a sigma factor is associated with the core the holoenzyme is formed, which can initiate transcription.

The catalysed reaction is RNA(n) + a ribonucleoside 5'-triphosphate = RNA(n+1) + diphosphate. Functionally, promotes RNA polymerase assembly. Latches the N- and C-terminal regions of the beta' subunit thereby facilitating its interaction with the beta and alpha subunits. This chain is DNA-directed RNA polymerase subunit omega, found in Rickettsia typhi (strain ATCC VR-144 / Wilmington).